We begin with the raw amino-acid sequence, 261 residues long: Arcelin-5B (261 aa).

The N-terminal stretch at 1–21 (MASSKLLSLALFLVLLTHANS) is a signal peptide. 2 N-linked (GlcNAc...) asparagine glycosylation sites follow: asparagine 91 and asparagine 100. The cysteines at positions 167 and 203 are disulfide-linked.

It belongs to the leguminous lectin family. As to quaternary structure, monomer.

Its function is as follows. Seed storage. This carbohydrate-binding lectin has toxic effects on bean bruchid pests. This chain is Arcelin-5B (ARC5B), found in Phaseolus vulgaris (Kidney bean).